The sequence spans 61 residues: UPF0391 membrane protein Ajs_0703 (61 aa).

Transmembrane regions (helical) follow at residues 5–25 (AIIF…GVAA) and 33–53 (VLFV…LLGI).

The protein belongs to the UPF0391 family.

Its subcellular location is the cell membrane. This chain is UPF0391 membrane protein Ajs_0703, found in Acidovorax sp. (strain JS42).